A 322-amino-acid polypeptide reads, in one-letter code: Eukaryotic translation initiation factor 3 subunit I (322 aa).

5 WD repeats span residues 4–43 (GHER…RLGT), 46–85 (GHQG…IIAS), 141–180 (MTES…KVVD), 184–223 (DHTA…CLKT), and 281–322 (GHFG…NIFE).

The protein belongs to the eIF-3 subunit I family. In terms of assembly, component of the eukaryotic translation initiation factor 3 (eIF-3) complex. The eIF-3 complex interacts with pix.

Its subcellular location is the cytoplasm. Its function is as follows. Component of the eukaryotic translation initiation factor 3 (eIF-3) complex, which is involved in protein synthesis of a specialized repertoire of mRNAs and, together with other initiation factors, stimulates binding of mRNA and methionyl-tRNAi to the 40S ribosome. The eIF-3 complex specifically targets and initiates translation of a subset of mRNAs involved in cell proliferation. The polypeptide is Eukaryotic translation initiation factor 3 subunit I (Drosophila ananassae (Fruit fly)).